The following is a 1913-amino-acid chain: Protein TIC 214 (1913 aa).

Helical transmembrane passes span I18–G38, F64–L84, L124–L144, V172–I192, and L214–L234. Disordered stretches follow at residues K245–E330, Y707–T734, and E1605–K1652. Positions K260 to Q289 are enriched in basic and acidic residues. Acidic residues predominate over residues E303 to E314. The span at E315–E330 shows a compositional bias: basic and acidic residues. Over residues P718–N729 the composition is skewed to low complexity.

It belongs to the TIC214 family. As to quaternary structure, part of the Tic complex.

It is found in the plastid. The protein resides in the chloroplast inner membrane. Involved in protein precursor import into chloroplasts. May be part of an intermediate translocation complex acting as a protein-conducting channel at the inner envelope. In Acorus calamus var. americanus (American sweet flag), this protein is Protein TIC 214.